A 213-amino-acid polypeptide reads, in one-letter code: Thymidylate kinase (213 aa).

10–17 is a binding site for ATP; sequence GLEGAGKT.

It belongs to the thymidylate kinase family.

The catalysed reaction is dTMP + ATP = dTDP + ADP. Functionally, phosphorylation of dTMP to form dTDP in both de novo and salvage pathways of dTTP synthesis. The sequence is that of Thymidylate kinase from Escherichia coli O81 (strain ED1a).